A 444-amino-acid chain; its full sequence is MKATEVIEKLKAKFPGQPEYIQAVSQVLGTIEEEYNKHPEFEKANLIERLCVPDRILQFRVSWVDDNGNVQTNLGYRVQHNNAIGPYKGGLRFHKSVNASILKFLAFEQTFKNSLTTLPMGGAKGGSDFDPHGKSDMEVMRFCQAFMNELYRLIGPDEDVPAGDIGVGGREVGYMFGQYKKLTHQFQGILTGKGLEFGGSLIRPEATGYGNVYFLEDMLKTRGESLEGKTVLVSGSGNVAQYTIEKLLQLGAKPVTCSDSNGYIYDPDGIDAEKLAFIMELKNVKRGRIKEYAEKYGVKYVENARPWGEKADIATPCATQDEINEAEAKTLIANGVFAVSEGANMPTEPAAIKVFQDAKILYCPGKASNAGGVATSGLEMSQNSERLSWTREEVDTKLHNIMDEIHANCVKYGTEPDGYINYVKGANVAGFMKVAKAMMAQGIY.

Positions 88, 109, and 112 each coordinate substrate. Lys-124 serves as the catalytic Proton donor. Residue Gly-163 coordinates substrate. Residues Thr-207 and Asn-238 each contribute to the NADP(+) site. Ser-376 is a binding site for substrate.

The protein belongs to the Glu/Leu/Phe/Val dehydrogenases family. In terms of assembly, homohexamer.

The catalysed reaction is L-glutamate + NAD(+) + H2O = 2-oxoglutarate + NH4(+) + NADH + H(+). It carries out the reaction L-glutamate + NADP(+) + H2O = 2-oxoglutarate + NH4(+) + NADPH + H(+). Functionally, catalyzes the reversible oxidative deamination of glutamate to alpha-ketoglutarate and ammonia. P.ruminicola possess both NADP(H)- and NAD(H)-dependent activities on the same enzyme, suggesting that both anabolic and catabolic forms of the enzyme might occur. This Xylanibacter ruminicola (Prevotella ruminicola) protein is NAD(P)-specific glutamate dehydrogenase (gdhA).